Here is a 316-residue protein sequence, read N- to C-terminus: Cell division protein ZipA (316 aa).

The Periplasmic portion of the chain corresponds to 1–5 (MQELR). A helical transmembrane segment spans residues 6-26 (FVLIVVGALAIAALLFHGLWS). Residues 27–316 (SKKEGKAKFG…QIVEFNAANA (290 aa)) are Cytoplasmic-facing. Residues 36–65 (GNKPLGKLDVDQGDKDSVEQERSFAPATED) form a disordered region. Residues 41–57 (GKLDVDQGDKDSVEQER) are compositionally biased toward basic and acidic residues.

It belongs to the ZipA family. As to quaternary structure, interacts with FtsZ via their C-terminal domains.

It localises to the cell inner membrane. In terms of biological role, essential cell division protein that stabilizes the FtsZ protofilaments by cross-linking them and that serves as a cytoplasmic membrane anchor for the Z ring. Also required for the recruitment to the septal ring of downstream cell division proteins. This Vibrio parahaemolyticus serotype O3:K6 (strain RIMD 2210633) protein is Cell division protein ZipA.